A 1003-amino-acid chain; its full sequence is MGEPEEVMPGSGAVFTFGKTQFAENIPSKFWFRNDVPTFLSCGDEHTAVVTGNNKLYMFGSNNWGQLGLGSKSTVSKPTCVKALKPEKVKFAACGRNHTLVSTEGGKVYAAGGNNEGQLGLGDTEERSTFHLISFFTSQRKIKQLSAGSNTSAALTEDGELFMWGDNSEGQIGLENVTNVCVPQQVTVGKPISWISCGYYHSAFVTTEGQLYTFGEPECGKLGLPNQLLVNHRMPQPVPGIPGKVVQVACGGGHTVVLTEKAVYTFGLGQFGQLGLGTFLFETSVPKAIEHIKDQKISFIACGENHTALITDMGLMYTFGDGRHGKLGLGLENSTNQFIPTLCSNFLRFIVQLVSCGGCHTLVFATPRLGGTEEMELKEINKSCFSAATSLSLSNLSSGIVLHQTLSARVRRREREKSPDSFQMTRTLPPIDGIPMPPVCFSPSPIPFYMAASNWSGKMTPEKEGLTQPEPDYFRDNMAKGKETDNSSATDSESLGETTDVLNMTHMMSLNSNDKSLKLSPIDKQKKQETIEKLKQHTAHFGNDDSKGCASEEMSKTVKEGKAYKQLLAKGIYMTQAAMTMEAFSDEDIGNDSGQPGPRADTHAEGVQRKIFSCESKHGLYPPDFKAIAKESDGGQSQKDPEAEETVSEKENELAEMAGLQARRQSEENLRNINMFFDDLPNRDVNIEDEESKDFVKDSRRNKQDVIFDSERESIEEPDSYLEGESESQQGTTDGFEQPESVEFSSGEKEDDDEVETDQNLWYSRKFIEQGHKEETEHILSKFMAKYDFKCDHLSEIPEEQEGAEDSEGSGIEEQEVEANENVEVPAGKEEKEIEILSDDLTDRAEDHEFSEDEEPEDMAEELDEDLESKKNVPADVASDNSLKKDETTKQEKRAICEYNENPKGNMHYHAKSSSSEVLNDSESTPNKDVKKSKKIFLFKRMSLMSQKSMQSNNEPLPEIKPIGDQIAFKGNKKDANQNHMGQNHQDTSPPDMERRSKSCTIL.

RCC1 repeat units lie at residues 54-105, 106-158, 159-208, 209-261, 262-313, and 314-367; these read NKLY…STEG, GKVY…LTED, GELF…VTTE, GQLY…LTEK, AVYT…ITDM, and GLMY…FATP. A Phosphoserine modification is found at S418. The disordered stretch occupies residues 460–495; the sequence is TPEKEGLTQPEPDYFRDNMAKGKETDNSSATDSESL. Residues 472–485 are compositionally biased toward basic and acidic residues; that stretch reads DYFRDNMAKGKETD. A compositionally biased stretch (polar residues) spans 486 to 495; it reads NSSATDSESL. A Phosphoserine modification is found at S520. 4 disordered regions span residues 625–657, 691–760, 794–932, and 968–1003; these read FKAI…LAEM, ESKD…TDQN, LSEI…DVKK, and AFKG…CTIL. The segment covering 693–715 has biased composition (basic and acidic residues); it reads KDFVKDSRRNKQDVIFDSERESI. 2 stretches are compositionally biased toward acidic residues: residues 716–726 and 797–821; these read EEPDSYLEGES and IPEE…EANE. Over residues 827 to 848 the composition is skewed to basic and acidic residues; that stretch reads AGKEEKEIEILSDDLTDRAEDH. Over residues 849–867 the composition is skewed to acidic residues; it reads EFSEDEEPEDMAEELDEDL. Residues 882–896 show a composition bias toward basic and acidic residues; it reads SLKKDETTKQEKRAI. Over residues 913–924 the composition is skewed to low complexity; sequence SSSSEVLNDSES. Over residues 978–989 the composition is skewed to polar residues; the sequence is QNHMGQNHQDTS. Residue C1000 is modified to Cysteine methyl ester. Residue C1000 is the site of S-geranylgeranyl cysteine attachment. The propeptide at 1001–1003 is removed in mature form; that stretch reads TIL.

As to quaternary structure, interacts with PDE6D. Interacts with RPGRIP1. Interacts with RPGRIP1L. PDE6D, RPGRIP1 and RPGRIP1L may compete for the same binding sites. Interacts with NPM1. Interacts with SMC1A and SMC3. Interacts with CEP290. Interacts with WHRN. Interacts with SPATA7. Interacts with RAB37 and RAB8A (in GDP-bound forms); functions as GEF for RAB37 and RAB8A. In terms of processing, prenylated. Isoform 1 is expressed exclusively in testis. Isoforms 2, 3 and 4 are widely expressed.

It localises to the golgi apparatus. The protein localises to the cell projection. The protein resides in the cilium. It is found in the cytoplasm. Its subcellular location is the cytoskeleton. It localises to the cilium basal body. The protein localises to the microtubule organizing center. The protein resides in the centrosome. It is found in the cilium axoneme. Its subcellular location is the flagellum axoneme. Acts as a guanine-nucleotide releasing factor (GEF) for RAB8A and RAB37 by promoting the conversion of inactive RAB-GDP to the active form RAB-GTP. GEF activity towards RAB8A may facilitate ciliary trafficking by modulating ciliary intracellular localization of RAB8A. GEF activity towards RAB37 maintains autophagic homeostasis and retinal function. Involved in photoreceptor integrity. May control cilia formation by regulating actin stress filaments and cell contractility. May be involved in microtubule organization and regulation of transport in primary cilia. May play a critical role in spermatogenesis and in intraflagellar transport processes. In Canis lupus familiaris (Dog), this protein is X-linked retinitis pigmentosa GTPase regulator (RPGR).